The following is a 1121-amino-acid chain: MDALEDYVWPRATSELILLPVTGLECVGDRLLAGEGPDVLVYSLDFGGHLRMIKRVQNLLGHYLIHGFRIRPEPNGDLDLEAMVAVFGSKGLRVVKISWGQGHFRELWRSGLWNMSDWIWDARWLEGNIALALGHNSVVLYDPVVGCILQEVPCTDRCTLSSACLIGDAWKELTIVAGAVSNQLLVWYPATALADNKPVAPDRRISGHVGIIFSMSYLESKGLLATASEDRSVRIWKVGDLRVPGGRVQNIGHCFGHSARVWQVKLLENYLISAGEDCVCLVWSHEGEILQAFRGHQGRGIRAIAAHERQAWVITGGDDSGIRLWHLVGRGYRGLGVSALCFKSRSRPGTLKAVTLAGSWRLLAVTDTGALYLYDVEVKRWEQLLEDKHFQSYCLLEAAPGPEGFGLCAMANGEGRVKVVPINTPTAAVDRTLFPGKVHSLSWALRGYEELLLLASGPGGVVACLEISAAPSGKAIFVKERCRYLLPPSKQRWHTCSAFLPPGDFLVCSDRRGSVLLFPSRPGLLKDPGVGGKAGAGAGAPGVGSGSSGGGNAFTGLGPVSTLPSLHGKQGVTSVTCHGGYVYTTGRDGAYYQLFVRDSQLQPVLRQKSCRGMNWLAGLRIVPDGSMVILGFHANEFVVWNPRSHEKLHIVNCGGGHRSWAFSDTEAAMAFAYLKDGDVMLYRALGGCTRPHVILREGLHGREITCVKRVGTITLGPEYGVPSFMQPDDLEPGSEGPDLTDIVITCSEDTTVCVLALPTTTGSAHALTAVCNHISSVRAVAVWGIGTPGGPQDPQPGLSAHVVSAGGRAEMHCFSIMVTPDPSTPSRLACHVMHLSSHRLDEYWDRQHNRHRMVKVDPETRYMSLAVCELDQPSLGPLVAAACSDGAVRLFLLQDSGRILQLLAETFHHKRCVLKVHSFTHEVPNQRRRLLLCSAATDGSLAFWDLTTMLDHDSTVLEPPVDPGLPYRLGTPSLTLQAHSCGINSLHTLPTREGHHLVASGSEDGSLHVFVLAVEMLELEEAVGEAGLVPQLRVLEEYSVPCAHAAHVTGLKILSPSIMVSASIDQRLTFWRLGHGEPTFMNSTVFHVPDVADMDCWPVSPEFGHRCALGGQGLEVYNWYD.

Position 1 is an N-acetylmethionine (M1). 19 WD repeats span residues 53 to 97 (IKRV…VVKI), 105 to 143 (RELW…LYDP), 147 to 189 (CILQ…VWYP), 200 to 238 (APDR…IWKV), 247 to 285 (RVQN…VWSH), 289 to 327 (ILQA…LWHL), 335 to 376 (LGVS…LYDV), 381 to 422 (WEQL…VVPI), 425 to 470 (PTAA…ISAA), 476 to 520 (IFVK…LFPS), 559 to 598 (PVST…FVRD), 604 to 642 (VLRQ…VWNP), 645 to 684 (HEKL…LYRA), 739 to 785 (LTDI…VWGI), 848 to 893 (HNRH…LFLL), 901 to 946 (QLLA…FWDL), 970 to 1012 (GTPS…VFVL), 1036 to 1073 (EEYS…FWRL), and 1079 to 1121 (TFMN…NWYD).

This sequence belongs to the WD repeat WDR6 family. As to quaternary structure, interacts with FTSJ1; the interaction is direct, and required for 2'-O-methylation of position 34 in substrate tRNAs. Interacts with IRS4. Interacts with STK11/LKB1.

It localises to the cytoplasm. Functionally, together with methyltransferase FTSJ1, methylates the 2'-O-ribose of nucleotides at position 34 of the tRNA anticodon loop of substrate tRNAs. Required for the correct positioning of the substrate tRNA for methylation. Required to suppress amino acid starvation-induced autophagy. Enhances the STK11/LKB1-induced cell growth suppression activity. The sequence is that of tRNA (34-2'-O)-methyltransferase regulator WDR6 (WDR6) from Pongo abelii (Sumatran orangutan).